The sequence spans 493 residues: Transcript termination protein A18 (493 aa).

The Helicase ATP-binding domain occupies 100–256 (MIESKRPLYI…NSIINIAKLS (157 aa)). 113–120 (LACGFGKT) contacts ATP. A DESH box motif is present at residues 206–209 (DESH).

This sequence belongs to the helicase family. Poxviruses subfamily. As to quaternary structure, interacts with G2. Might be part of a transcription complex composed at least of G2, A18, and H5.

It localises to the virion. In terms of biological role, DNA helicase which seems to act as a postreplicative transcription termination factor. Involved in ATP-dependent release of nascent RNA. Forms a stable complex with single-stranded DNA, and to a lesser extent RNA. The chain is Transcript termination protein A18 from Rabbitpox virus (strain Utrecht) (RPV).